Consider the following 177-residue polypeptide: Large ribosomal subunit protein uL6 (177 aa).

This sequence belongs to the universal ribosomal protein uL6 family. Part of the 50S ribosomal subunit.

This protein binds to the 23S rRNA, and is important in its secondary structure. It is located near the subunit interface in the base of the L7/L12 stalk, and near the tRNA binding site of the peptidyltransferase center. The sequence is that of Large ribosomal subunit protein uL6 from Bordetella pertussis (strain Tohama I / ATCC BAA-589 / NCTC 13251).